Here is a 215-residue protein sequence, read N- to C-terminus: Probable nicotinate-nucleotide adenylyltransferase (215 aa).

The protein belongs to the NadD family.

The enzyme catalyses nicotinate beta-D-ribonucleotide + ATP + H(+) = deamido-NAD(+) + diphosphate. It functions in the pathway cofactor biosynthesis; NAD(+) biosynthesis; deamido-NAD(+) from nicotinate D-ribonucleotide: step 1/1. In terms of biological role, catalyzes the reversible adenylation of nicotinate mononucleotide (NaMN) to nicotinic acid adenine dinucleotide (NaAD). This is Probable nicotinate-nucleotide adenylyltransferase from Shewanella putrefaciens (strain CN-32 / ATCC BAA-453).